The primary structure comprises 118 residues: Large ribosomal subunit protein uL24 (118 aa).

The protein belongs to the universal ribosomal protein uL24 family. As to quaternary structure, part of the 50S ribosomal subunit.

Its function is as follows. One of two assembly initiator proteins, it binds directly to the 5'-end of the 23S rRNA, where it nucleates assembly of the 50S subunit. In terms of biological role, one of the proteins that surrounds the polypeptide exit tunnel on the outside of the subunit. In Prochlorococcus marinus (strain NATL1A), this protein is Large ribosomal subunit protein uL24.